The sequence spans 406 residues: DNA primase DnaG (406 aa).

Residues 169-247 (PNLIIVEGRA…KIDFVARAPI (79 aa)) form the Toprim domain. Positions 175, 220, and 222 each coordinate Mg(2+).

This sequence belongs to the archaeal DnaG primase family. In terms of assembly, forms a ternary complex with MCM helicase and DNA. Component of the archaeal exosome complex. Interacts with Csl4 but not with Rrp4. The cofactor is Mg(2+).

It catalyses the reaction ssDNA + n NTP = ssDNA/pppN(pN)n-1 hybrid + (n-1) diphosphate.. RNA polymerase that catalyzes the synthesis of short RNA molecules used as primers for DNA polymerase during DNA replication. Can use NTPs but not dNTPs. Binds DNA. Also part of the exosome, which is a complex involved in RNA degradation. Acts as a poly(A)-binding protein that enhances the interaction between heteromeric, adenine-rich transcripts and the exosome. This Saccharolobus solfataricus (strain ATCC 35092 / DSM 1617 / JCM 11322 / P2) (Sulfolobus solfataricus) protein is DNA primase DnaG.